Here is a 60-residue protein sequence, read N- to C-terminus: Large ribosomal subunit protein uL30 (60 aa).

Belongs to the universal ribosomal protein uL30 family. As to quaternary structure, part of the 50S ribosomal subunit.

This Mycobacteroides abscessus (strain ATCC 19977 / DSM 44196 / CCUG 20993 / CIP 104536 / JCM 13569 / NCTC 13031 / TMC 1543 / L948) (Mycobacterium abscessus) protein is Large ribosomal subunit protein uL30.